We begin with the raw amino-acid sequence, 206 residues long: Large ribosomal subunit protein uL4 (206 aa).

The tract at residues 63–97 is disordered; sequence MYKQKGTGRARHHSARAPQFRGGGKAHGPVVRSHE. Positions 64-77 are enriched in basic residues; the sequence is YKQKGTGRARHHSA.

It belongs to the universal ribosomal protein uL4 family. In terms of assembly, part of the 50S ribosomal subunit.

One of the primary rRNA binding proteins, this protein initially binds near the 5'-end of the 23S rRNA. It is important during the early stages of 50S assembly. It makes multiple contacts with different domains of the 23S rRNA in the assembled 50S subunit and ribosome. In terms of biological role, forms part of the polypeptide exit tunnel. This chain is Large ribosomal subunit protein uL4, found in Rhizobium johnstonii (strain DSM 114642 / LMG 32736 / 3841) (Rhizobium leguminosarum bv. viciae).